The primary structure comprises 501 residues: Glycerol kinase (501 aa).

Thr14 contributes to the ADP binding site. Residues Thr14, Thr15, and Ser16 each coordinate ATP. Residue Thr14 coordinates sn-glycerol 3-phosphate. Arg18 contacts ADP. Sn-glycerol 3-phosphate contacts are provided by Arg84, Glu85, Tyr135, and Asp244. Glycerol contacts are provided by Arg84, Glu85, Tyr135, Asp244, and Gln245. Positions 266 and 309 each coordinate ADP. 4 residues coordinate ATP: Thr266, Gly309, Gln313, and Gly410. The ADP site is built by Gly410 and Asn414.

The protein belongs to the FGGY kinase family.

It catalyses the reaction glycerol + ATP = sn-glycerol 3-phosphate + ADP + H(+). The protein operates within polyol metabolism; glycerol degradation via glycerol kinase pathway; sn-glycerol 3-phosphate from glycerol: step 1/1. Inhibited by fructose 1,6-bisphosphate (FBP). In terms of biological role, key enzyme in the regulation of glycerol uptake and metabolism. Catalyzes the phosphorylation of glycerol to yield sn-glycerol 3-phosphate. The protein is Glycerol kinase of Deinococcus radiodurans (strain ATCC 13939 / DSM 20539 / JCM 16871 / CCUG 27074 / LMG 4051 / NBRC 15346 / NCIMB 9279 / VKM B-1422 / R1).